Reading from the N-terminus, the 153-residue chain is MKIRVVAVGRDRSGLYAPAVDEYAKRLGRYLRFELVEVPEARKLAGTPGAKGEEGAALLAKLGPRERVVVLDERGDELTSVAFAERVRRWMERGQDVALLIGGSDGLAPEVLARAEERLAVSRFTLAHRLARLVLVEQLYRAMTILRGEPYHK.

L71 and G102 together coordinate S-adenosyl-L-methionine.

It belongs to the RNA methyltransferase RlmH family. Homodimer.

It localises to the cytoplasm. It catalyses the reaction pseudouridine(1915) in 23S rRNA + S-adenosyl-L-methionine = N(3)-methylpseudouridine(1915) in 23S rRNA + S-adenosyl-L-homocysteine + H(+). Its function is as follows. Specifically methylates the pseudouridine at position 1915 (m3Psi1915) in 23S rRNA. This is Ribosomal RNA large subunit methyltransferase H from Anaeromyxobacter dehalogenans (strain 2CP-C).